The chain runs to 106 residues: MNQIINGIPVTYILGLAGILFSIGVLGVLIRRNIVIIFMSVELILNSVNLVFVTFSKALSHINGETIVFFVMAIAAAEAAVGLALVIAIFRHKKSTNVDELQSMKW.

A run of 3 helical transmembrane segments spans residues 10–30 (VTYILGLAGILFSIGVLGVLI), 34–54 (IVIIFMSVELILNSVNLVFVT), and 67–87 (IVFFVMAIAAAEAAVGLALVI).

It belongs to the complex I subunit 4L family. As to quaternary structure, NDH-1 is composed of 14 different subunits. Subunits NuoA, H, J, K, L, M, N constitute the membrane sector of the complex.

It is found in the cell inner membrane. It catalyses the reaction a quinone + NADH + 5 H(+)(in) = a quinol + NAD(+) + 4 H(+)(out). NDH-1 shuttles electrons from NADH, via FMN and iron-sulfur (Fe-S) centers, to quinones in the respiratory chain. The immediate electron acceptor for the enzyme in this species is believed to be ubiquinone. Couples the redox reaction to proton translocation (for every two electrons transferred, four hydrogen ions are translocated across the cytoplasmic membrane), and thus conserves the redox energy in a proton gradient. This Leptospira biflexa serovar Patoc (strain Patoc 1 / Ames) protein is NADH-quinone oxidoreductase subunit K.